The chain runs to 586 residues: Thioredoxin domain-containing protein 3 (586 aa).

Residues 10–116 (LQSVVNSQNL…NRKVITLIDE (107 aa)) enclose the Thioredoxin domain. C39 and C42 are joined by a disulfide. NDK regions lie at residues 157 to 254 (MAII…VLEE), 312 to 452 (VQTT…STLA), and 453 to 586 (LIKP…NPEN).

This sequence in the C-terminal section; belongs to the NDK family. Monomer. Testis-specific. Expressed mainly in round spermatids.

It localises to the cytoplasm. In terms of biological role, probably required during the final stages of sperm tail maturation in the testis and/or epididymis, where extensive disulfide bonding of fibrous sheath (FS) proteins occurs. In vitro, it has neither nucleoside diphosphate kinase (NDPK) activity nor reducing activity on disulfide bonds. Exhibits a 3'-5' exonuclease activity with a preference for single-stranded DNA, suggesting roles in DNA proofreading and repair. The polypeptide is Thioredoxin domain-containing protein 3 (Nme8) (Mus musculus (Mouse)).